A 246-amino-acid chain; its full sequence is 1-(5-phosphoribosyl)-5-[(5-phosphoribosylamino)methylideneamino] imidazole-4-carboxamide isomerase (246 aa).

Asp-7 serves as the catalytic Proton acceptor. Asp-129 acts as the Proton donor in catalysis.

This sequence belongs to the HisA/HisF family.

It is found in the cytoplasm. The enzyme catalyses 1-(5-phospho-beta-D-ribosyl)-5-[(5-phospho-beta-D-ribosylamino)methylideneamino]imidazole-4-carboxamide = 5-[(5-phospho-1-deoxy-D-ribulos-1-ylimino)methylamino]-1-(5-phospho-beta-D-ribosyl)imidazole-4-carboxamide. The protein operates within amino-acid biosynthesis; L-histidine biosynthesis; L-histidine from 5-phospho-alpha-D-ribose 1-diphosphate: step 4/9. The sequence is that of 1-(5-phosphoribosyl)-5-[(5-phosphoribosylamino)methylideneamino] imidazole-4-carboxamide isomerase from Buchnera aphidicola subsp. Acyrthosiphon pisum (strain 5A).